Reading from the N-terminus, the 107-residue chain is Nucleoid-associated protein amb4104 (107 aa).

The protein belongs to the YbaB/EbfC family. Homodimer.

It is found in the cytoplasm. The protein resides in the nucleoid. Its function is as follows. Binds to DNA and alters its conformation. May be involved in regulation of gene expression, nucleoid organization and DNA protection. The chain is Nucleoid-associated protein amb4104 from Paramagnetospirillum magneticum (strain ATCC 700264 / AMB-1) (Magnetospirillum magneticum).